The primary structure comprises 507 residues: Anaerobic nitric oxide reductase transcription regulator NorR (507 aa).

Aspartate 57 bears the 4-aspartylphosphate mark. The region spanning 188-417 (IIGLSSVMQQ…LEHSIYRAAI (230 aa)) is the Sigma-54 factor interaction domain. Residues 216-223 (GETGVGKE) and 279-288 (ADNGTLFLDE) each bind ATP. The H-T-H motif DNA-binding region spans 483–502 (WAATARKLELDSGNLHRLAK).

It participates in nitrogen metabolism; nitric oxide reduction. Functionally, required for the expression of anaerobic nitric oxide (NO) reductase, acts as a transcriptional activator for at least the norVW operon. Activation also requires sigma-54. This chain is Anaerobic nitric oxide reductase transcription regulator NorR, found in Serratia proteamaculans (strain 568).